Reading from the N-terminus, the 73-residue chain is Disintegrin barbourin (73 aa).

One can recognise a Disintegrin domain in the interval 1–73 (EAGEECDCGS…ADCPRNGLYG (73 aa)). Disulfide bonds link C6/C21, C8/C16, C15/C38, C29/C35, C34/C59, and C47/C66. The Cell attachment site; atypical (KGD) motif lies at 51 to 53 (KGD).

The protein belongs to the venom metalloproteinase (M12B) family. P-II subfamily. P-IIa sub-subfamily. As to quaternary structure, monomer. Expressed by the venom gland.

It localises to the secreted. Its function is as follows. Inhibitor of ligand binding to the integrins alpha-IIb/beta-3 (ITGA2B/ITGB3). Competition with fibrinogen for the RGD recognition sites on the alpha-IIb/beta-3 integrin results in the inhibition of platelet aggregation induced by ADP, thrombin, platelet-activating factor and collagen. This is Disintegrin barbourin from Sistrurus miliarius barbouri (Dusky pigmy rattlesnake).